A 482-amino-acid polypeptide reads, in one-letter code: 7-deoxyloganetic acid glucosyl transferase (482 aa).

The active-site Proton acceptor is H22. H22 contributes to the an anthocyanidin binding site. D127 functions as the Charge relay in the catalytic mechanism. 8 residues coordinate UDP-alpha-D-glucose: T149, A362, Q364, H379, W382, N383, S384, and E387. An an anthocyanidin-binding site is contributed by A402. The UDP-alpha-D-glucose site is built by D403 and Q404.

The protein belongs to the UDP-glycosyltransferase family. As to expression, expressed in the leaf internal phloem-associated parenchyma (IPAP) inside the mesophyll. Mostly observed in leaves, roots and stems, and, to a lower extent, in flowers.

The protein resides in the nucleus. Its subcellular location is the cytoplasm. It localises to the cytosol. It catalyses the reaction 7-deoxyloganetate + UDP-alpha-D-glucose = 7-deoxyloganate + UDP + H(+). It participates in alkaloid biosynthesis. Its function is as follows. Component of the seco-iridoid and derivatives monoterpenoid indole alkaloids (MIAs, e.g. vincristine, quinine, and strychnine) biosynthesis pathway. Catalyzes the glucosylation of 7-deoxyloganetic acid to form 7-deoxyloganic acid using UDP-glucose as the sugar donor. Inactive with loganetic acid, loganetin, iridodial, iridotrial, 8-OH-geraniol, jasmonic acid, gibberellic acid, indole acetic acid, salicylic acid, abscisic acid, zeatin and luteolin. This chain is 7-deoxyloganetic acid glucosyl transferase, found in Catharanthus roseus (Madagascar periwinkle).